Consider the following 126-residue polypeptide: Aspartate 1-decarboxylase (126 aa).

Serine 25 (schiff-base intermediate with substrate; via pyruvic acid) is an active-site residue. Position 25 is a pyruvic acid (Ser) (serine 25). Threonine 57 provides a ligand contact to substrate. Tyrosine 58 acts as the Proton donor in catalysis. 73–75 (GAA) is a substrate binding site.

Belongs to the PanD family. As to quaternary structure, heterooctamer of four alpha and four beta subunits. Pyruvate is required as a cofactor. In terms of processing, is synthesized initially as an inactive proenzyme, which is activated by self-cleavage at a specific serine bond to produce a beta-subunit with a hydroxyl group at its C-terminus and an alpha-subunit with a pyruvoyl group at its N-terminus.

It localises to the cytoplasm. It catalyses the reaction L-aspartate + H(+) = beta-alanine + CO2. The protein operates within cofactor biosynthesis; (R)-pantothenate biosynthesis; beta-alanine from L-aspartate: step 1/1. In terms of biological role, catalyzes the pyruvoyl-dependent decarboxylation of aspartate to produce beta-alanine. This Pseudomonas fluorescens protein is Aspartate 1-decarboxylase.